A 184-amino-acid polypeptide reads, in one-letter code: ATP synthase subunit delta (184 aa).

This sequence belongs to the ATPase delta chain family. F-type ATPases have 2 components, F(1) - the catalytic core - and F(0) - the membrane proton channel. F(1) has five subunits: alpha(3), beta(3), gamma(1), delta(1), epsilon(1). F(0) has three main subunits: a(1), b(2) and c(10-14). The alpha and beta chains form an alternating ring which encloses part of the gamma chain. F(1) is attached to F(0) by a central stalk formed by the gamma and epsilon chains, while a peripheral stalk is formed by the delta and b chains.

The protein localises to the cell membrane. In terms of biological role, f(1)F(0) ATP synthase produces ATP from ADP in the presence of a proton or sodium gradient. F-type ATPases consist of two structural domains, F(1) containing the extramembraneous catalytic core and F(0) containing the membrane proton channel, linked together by a central stalk and a peripheral stalk. During catalysis, ATP synthesis in the catalytic domain of F(1) is coupled via a rotary mechanism of the central stalk subunits to proton translocation. Functionally, this protein is part of the stalk that links CF(0) to CF(1). It either transmits conformational changes from CF(0) to CF(1) or is implicated in proton conduction. This chain is ATP synthase subunit delta, found in Amoebophilus asiaticus (strain 5a2).